The chain runs to 368 residues: Proteinase-activated receptor 3 (368 aa).

The first 21 residues, 1–21, serve as a signal peptide directing secretion; the sequence is MEMKVLILVGVRLLFLPTTVC. Residues 22 to 37 constitute a propeptide, removed for receptor activation; the sequence is QSGMKHVSDNSALTAE. Topologically, residues 38–93 are extracellular; it reads SFNGNEHSFEEFPLSDIEGWTGATTTIKAKCPEESITTLHVNNATMGYLRSSLSTK. N80 carries an N-linked (GlcNAc...) asparagine glycan. The helical transmembrane segment at 94 to 114 threads the bilayer; it reads VIPAIYILVFVIGVPANIVTL. The Cytoplasmic portion of the chain corresponds to 115–123; that stretch reads WKLSSRTKS. A helical membrane pass occupies residues 124 to 144; sequence ICLVIFHTNLAIADLLFCVTL. At 145-166 the chain is on the extracellular side; the sequence is PFKIAYHLNGNDWVFGEVMCRV. Residues C164 and C243 are joined by a disulfide bond. The chain crosses the membrane as a helical span at residues 167 to 187; that stretch reads TTVAFYGNMYCAILILTCMGI. At 188 to 208 the chain is on the cytoplasmic side; that stretch reads NRYLATVHPFTYRKLPKRNFT. Residues 209-229 traverse the membrane as a helical segment; that stretch reads LLMCGVVWVMVVLYMLPLAIL. The Extracellular segment spans residues 230–257; the sequence is KQEYHLVQPGITTCHDVHDTCESPLPFQ. The chain crosses the membrane as a helical span at residues 258–278; that stretch reads FYYFVSLAFFGFLIPFVVSVF. Over 279-300 the chain is Cytoplasmic; sequence CYTTLIHKLNAQDRKWLRYIKA. A helical transmembrane segment spans residues 301–321; sequence VLLILVIFTICFAPTNIILII. At 322–338 the chain is on the extracellular side; the sequence is HHANYYYSNTDSLYFMY. A helical membrane pass occupies residues 339–359; sequence LIALCLGSLNSCLDPFLYFIM. At 360-368 the chain is on the cytoplasmic side; that stretch reads SKIVDQLTS.

Belongs to the G-protein coupled receptor 1 family. In terms of assembly, interacts with INSC/inscuteable and GPSM2. Post-translationally, a proteolytic cleavage generates a new N-terminus that functions as a tethered ligand.

It localises to the cell membrane. Functionally, receptor for activated thrombin coupled to G proteins that stimulate phosphoinositide hydrolysis. The chain is Proteinase-activated receptor 3 (F2rl2) from Rattus norvegicus (Rat).